A 428-amino-acid chain; its full sequence is Putative gustatory receptor 2a (428 aa).

Topologically, residues 1–40 (MDTLRALEPLHRACQVCNLWPWRLAPPPDSEGILLRRSRW) are cytoplasmic. Residues 41–61 (LELYGWTVLIAATSFTVYGLF) traverse the membrane as a helical segment. The Extracellular portion of the chain corresponds to 62-145 (QESSVEEKQD…INMRRQTSRR (84 aa)). Residues 146 to 166 (AVWILWGYAVSQLLILGAKLL) form a helical membrane-spanning segment. Residues 167-173 (SRGDRFP) are Cytoplasmic-facing. Residues 174–194 (IYWISYLLPLLVCGLRYFQIF) traverse the membrane as a helical segment. Asparagine 195 carries N-linked (GlcNAc...) asparagine glycosylation. At 195–250 (NATQLVRQRLDVLLVALQQLQLHQKGPAVDTVLEEQEDLEEAAMDRLIAVRLVYQR) the chain is on the extracellular side. The chain crosses the membrane as a helical span at residues 251–271 (VWALVALLNRCYGLSMLMQVG). Residues 272 to 300 (NDFLAITSNCYWMFLNFRQSAASPFDILQ) lie on the Cytoplasmic side of the membrane. Residues 301–321 (IVASGVWSAPHLGNVLVLSLL) form a helical membrane-spanning segment. Residues 322–349 (CDRTAQCASRLALCLHQVSVDLRNESHN) are Extracellular-facing. The N-linked (GlcNAc...) asparagine glycan is linked to asparagine 345. The helical transmembrane segment at 350–370 (ALVGTLVRYCAPLIILVPLQI) threads the bilayer. Residues 371–395 (TQFSLQLLHQRLHFSAAGFFNVDCT) are Cytoplasmic-facing. Residues 396-416 (LLYTIVGATTTYLIILIQFHM) form a helical membrane-spanning segment. At 417–428 (SESTIGSDSNGQ) the chain is on the extracellular side.

It belongs to the insect chemoreceptor superfamily. Gustatory receptor (GR) family. Gr2a subfamily. In terms of tissue distribution, expressed in neurons of the terminal external chemosensory organ, the dorsal external chemosensory organ, as well as in the dorsal pharyngeal sense organ of larvae.

Its subcellular location is the cell membrane. Probable gustatory receptor which mediates acceptance or avoidance behavior, depending on its not yet determined substrates. The polypeptide is Putative gustatory receptor 2a (Gr2a) (Drosophila melanogaster (Fruit fly)).